The chain runs to 504 residues: Catalase (504 aa).

An N-terminal signal peptide occupies residues 1-21 (MQMSKSFLLITVGLASTSLQA). Catalysis depends on residues His72 and Asn145. Tyr353 contacts heme.

It belongs to the catalase family. Heme serves as cofactor.

The protein localises to the periplasm. It catalyses the reaction 2 H2O2 = O2 + 2 H2O. In terms of biological role, decomposes hydrogen peroxide into water and oxygen; serves to protect cells from the toxic effects of hydrogen peroxide. The protein is Catalase of Vibrio parahaemolyticus serotype O3:K6 (strain RIMD 2210633).